A 728-amino-acid polypeptide reads, in one-letter code: 1,4-alpha-glucan branching enzyme GlgB (728 aa).

Aspartate 405 serves as the catalytic Nucleophile. Residue glutamate 458 is the Proton donor of the active site.

The protein belongs to the glycosyl hydrolase 13 family. GlgB subfamily. In terms of assembly, monomer.

It carries out the reaction Transfers a segment of a (1-&gt;4)-alpha-D-glucan chain to a primary hydroxy group in a similar glucan chain.. It functions in the pathway glycan biosynthesis; glycogen biosynthesis. Catalyzes the formation of the alpha-1,6-glucosidic linkages in glycogen by scission of a 1,4-alpha-linked oligosaccharide from growing alpha-1,4-glucan chains and the subsequent attachment of the oligosaccharide to the alpha-1,6 position. The polypeptide is 1,4-alpha-glucan branching enzyme GlgB (Escherichia coli O6:H1 (strain CFT073 / ATCC 700928 / UPEC)).